Reading from the N-terminus, the 473-residue chain is Photosystem II CP43 reaction center protein (473 aa).

A propeptide spanning residues 1–14 is cleaved from the precursor; it reads MKTLYSLRRFYHVE. T15 is modified (N-acetylthreonine). A Phosphothreonine modification is found at T15. Helical transmembrane passes span 69–93, 134–155, 178–200, 255–275, and 291–312; these read LFEV…PHLA, LLGP…KDRN, KALY…RKIT, KPFA…LSYS, and WFNN…ASQA. E367 is a [CaMn4O5] cluster binding site. A helical membrane pass occupies residues 447-471; the sequence is RARAAAAGFEKGIDRDFEPVLFMTP.

This sequence belongs to the PsbB/PsbC family. PsbC subfamily. In terms of assembly, PSII is composed of 1 copy each of membrane proteins PsbA, PsbB, PsbC, PsbD, PsbE, PsbF, PsbH, PsbI, PsbJ, PsbK, PsbL, PsbM, PsbT, PsbX, PsbY, PsbZ, Psb30/Ycf12, at least 3 peripheral proteins of the oxygen-evolving complex and a large number of cofactors. It forms dimeric complexes. It depends on Binds multiple chlorophylls and provides some of the ligands for the Ca-4Mn-5O cluster of the oxygen-evolving complex. It may also provide a ligand for a Cl- that is required for oxygen evolution. PSII binds additional chlorophylls, carotenoids and specific lipids. as a cofactor.

It localises to the plastid. The protein resides in the chloroplast thylakoid membrane. Its function is as follows. One of the components of the core complex of photosystem II (PSII). It binds chlorophyll and helps catalyze the primary light-induced photochemical processes of PSII. PSII is a light-driven water:plastoquinone oxidoreductase, using light energy to abstract electrons from H(2)O, generating O(2) and a proton gradient subsequently used for ATP formation. The protein is Photosystem II CP43 reaction center protein of Solanum tuberosum (Potato).